The primary structure comprises 222 residues: C-reactive protein (222 aa).

The signal sequence occupies residues 1 to 19 (MEKLSLCLLVIISLSNAFA). Position 20 is a pyrrolidone carboxylic acid (Gln-20). One can recognise a Pentraxin (PTX) domain in the interval 24-222 (IGKAFVFPKE…EVYVKPQLWP (199 aa)). Cysteines 55 and 113 form a disulfide. The Ca(2+) site is built by Asn-78, Glu-154, Gln-155, Asp-156, and Gln-166.

It belongs to the pentraxin family. Homopentamer. Pentraxin (or pentaxin) have a discoid arrangement of 5 non-covalently bound subunits. Interacts with FCN1; may regulate monocyte activation by FCN1. Ca(2+) serves as cofactor. In terms of tissue distribution, found in plasma.

The protein resides in the secreted. Functionally, displays several functions associated with host defense: it promotes agglutination, bacterial capsular swelling, phagocytosis and complement fixation through its calcium-dependent binding to phosphorylcholine. Can interact with DNA and histones and may scavenge nuclear material released from damaged circulating cells. The protein is C-reactive protein (CRP) of Sus scrofa (Pig).